The following is a 579-amino-acid chain: A-type ATP synthase subunit A (579 aa).

229 to 236 is an ATP binding site; it reads GPFGSGKT.

Belongs to the ATPase alpha/beta chains family. In terms of assembly, has multiple subunits with at least A(3), B(3), C, D, E, F, H, I and proteolipid K(x).

It is found in the cell membrane. The enzyme catalyses ATP + H2O + 4 H(+)(in) = ADP + phosphate + 5 H(+)(out). In terms of biological role, component of the A-type ATP synthase that produces ATP from ADP in the presence of a proton gradient across the membrane. The A chain is the catalytic subunit. The chain is A-type ATP synthase subunit A from Methanocella arvoryzae (strain DSM 22066 / NBRC 105507 / MRE50).